The sequence spans 1102 residues: Ubiquitin carboxyl-terminal hydrolase 7 (1102 aa).

Over residues 1-10 (MNHQQQQQQQ) the composition is skewed to low complexity. The interval 1–38 (MNHQQQQQQQKAGEQQLSEPEDMEMEAGDTDDPPRITQ) is disordered. Residues 1–208 (MNHQQQQQQQ…APHGVAWDSK (208 aa)) form an interaction with TSPYL5 region. Position 18 is a phosphoserine (Ser-18). Over residues 19 to 31 (EPEDMEMEAGDTD) the composition is skewed to acidic residues. Ser-49 carries the post-translational modification Phosphoserine. Residues 53 to 208 (NTAEEDMEDD…APHGVAWDSK (156 aa)) form an interaction with p53/TP53, MDM2 and EBNA1 region. In terms of domain architecture, MATH spans 68 to 195 (EATFQFTVER…DDKVTFEVFV (128 aa)). The necessary for nuclear localization stretch occupies residues 70-205 (TFQFTVERFS…QADAPHGVAW (136 aa)). A USP domain is found at 214–521 (VGLKNQGATC…NAYMLVYIRE (308 aa)). Catalysis depends on Cys-223, which acts as the Nucleophile. His-464 acts as the Proton acceptor in catalysis. Residues 622 to 801 (LWPMQARSNG…HRVDVIFCDK (180 aa)) form an interaction with ICP0/VMW110 region. At Lys-869 the chain carries N6-acetyllysine; alternate. A Glycyl lysine isopeptide (Lys-Gly) (interchain with G-Cter in SUMO2); alternate cross-link involves residue Lys-869. Lys-869 is covalently cross-linked (Glycyl lysine isopeptide (Lys-Gly) (interchain with G-Cter in ubiquitin); alternate). Residue Lys-882 forms a Glycyl lysine isopeptide (Lys-Gly) (interchain with G-Cter in SUMO2) linkage. The residue at position 963 (Ser-963) is a Phosphoserine. N6-acetyllysine occurs at positions 1084 and 1096.

This sequence belongs to the peptidase C19 family. As to quaternary structure, monomer. Homodimer. Part of a complex with DAXX, MDM2, RASSF1 and USP7. Part of a complex with DAXX, MDM2 and USP7. Interacts with MDM2; the interaction is independent of p53/TP53. Interacts with DAXX; the interaction is direct and independent of MDM2 and p53/TP53. Component of a complex composed of KMT2E/MLL5 (isoform 3), OGT (isoform 1) and USP7; the complex stabilizes KMT2E/MLL5, preventing KMT2E/MLL5 ubiquitination and proteasomal-mediated degradation. Interacts (via MATH domain) with KMT2E/MLL5 isoform 3. Interacts with OGT isoform 1. Interacts with FOXO4; the interaction is enhanced in presence of hydrogen peroxide and occurs independently of p53/TP53. Interacts with p53/TP53; the interaction is enhanced in response to DNA damage. Interacts with TSPYL5; this impairs interaction with p53/TP53. Interacts with PTEN; the interaction is direct. Interacts with ATXN1 and the strength of interaction is influenced by the length of the poly-Gln region in ATXN1. A weaker interaction seen with mutants having longer poly-Gln regions. Interacts with KIAA1530/UVSSA. Interacts with ABRAXAS2; the interaction is direct. Identified in a complex with TP53/p53 and ABRAXAS2. Interacts with MEX3C and antagonizes its ability to degrade mRNA. Interacts with DNMT1 and UHRF1. Interacts with FOXP3. Interacts (via MATH domain) with RNF220. Associated component of the Polycomb group (PcG) multiprotein PRC1-like complex. Interacts with EPOP. Interacts with OTUD4 and USP9X; the interaction is direct. Interacts with CRY2. Interacts with REST. Interacts with ERCC6. Part of a complex consisting of USP7, MAGEL2 and TRIM27; directly interacts with MAGEL2; directly interacts with TRIM27. (Microbial infection) Isoform 1 and isoform 2 interact with herpesvirus 1 trans-acting transcriptional protein ICP0/VMW110. Binding to ICP0/VMW110 may modulate the substrate specificity or activity of USP7 to stabilize viral proteins. In terms of assembly, (Microbial infection) Interacts with Epstein-Barr virus EBNA1; the interaction is independent and simultaneous to EBNA1 interaction with USP7 as well as necessary for PML nuclear bodies disruption by EBNA1. EBNA1, USP7 and CSNK2B form a ternary complex. EBNA1 shows a 10-fold higher affinity than p53/TP53 and can compete with it for USP7 binding. As to quaternary structure, (Microbial infection) Interacts with human cytomegalovirus proteins UL35 and UL35A; these interactions inhibit the ability of USP7 to form nuclear bodies. (Microbial infection) Interacts with herpes virus 8/HHV-8 proteins vIRF-1 and vIRF-3; these interactions may disrupt TP53 signaling pathway during viral infection by decreasing the availability of USP7 for deubiquitinating and stabilizing TP53. In terms of assembly, (Microbial infection) Interacts with herpes virus 8/HHV-8 protein vIRF-2; this interaction modulates antiviral signaling via disruption of USP7 interactions with innate immune signaling proteins TRAF3 and TRAF6 thus affecting their ubiquitination. Isoform 1: Phosphorylated. Isoform 1 is phosphorylated at positions Ser-18 and Ser-963. Isoform 2: Not phosphorylated. Post-translationally, isoform 1: Polyneddylated. Isoform 2: Not Polyneddylated. In terms of processing, isoform 1 and isoform 2: Not sumoylated. Isoform 1 and isoform 2: Polyubiquitinated by herpesvirus 1 trans-acting transcriptional protein ICP0/VMW110; leading to its subsequent proteasomal degradation. Isoform 1: Ubiquitinated at Lys-869. Expressed in neural progenitor cells (at protein level). Widely expressed. Overexpressed in prostate cancer.

It is found in the nucleus. It localises to the cytoplasm. Its subcellular location is the PML body. The protein localises to the chromosome. The catalysed reaction is Thiol-dependent hydrolysis of ester, thioester, amide, peptide and isopeptide bonds formed by the C-terminal Gly of ubiquitin (a 76-residue protein attached to proteins as an intracellular targeting signal).. Its activity is regulated as follows. Inhibited by N-ethyl-maleimide (NEM) and divalent cations. Tolerates high concentrations of NaCl but is inhibited at concentrations of 195 mM and higher. In terms of biological role, hydrolase that deubiquitinates target proteins such as ARMC5, FOXO4, DEPTOR, KAT5, p53/TP53, MDM2, ERCC6, DNMT1, UHRF1, PTEN, KMT2E/MLL5 and DAXX. Together with DAXX, prevents MDM2 self-ubiquitination and enhances the E3 ligase activity of MDM2 towards p53/TP53, thereby promoting p53/TP53 ubiquitination and proteasomal degradation. Deubiquitinates p53/TP53, preventing degradation of p53/TP53, and enhances p53/TP53-dependent transcription regulation, cell growth repression and apoptosis. Deubiquitinates p53/TP53 and MDM2 and strongly stabilizes p53/TP53 even in the presence of excess MDM2, and also induces p53/TP53-dependent cell growth repression and apoptosis. Deubiquitination of FOXO4 in presence of hydrogen peroxide is not dependent on p53/TP53 and inhibits FOXO4-induced transcriptional activity. In association with DAXX, is involved in the deubiquitination and translocation of PTEN from the nucleus to the cytoplasm, both processes that are counteracted by PML. Deubiquitinates KMT2E/MLL5 preventing KMT2E/MLL5 proteasomal-mediated degradation. Involved in cell proliferation during early embryonic development. Involved in transcription-coupled nucleotide excision repair (TC-NER) in response to UV damage: recruited to DNA damage sites following interaction with KIAA1530/UVSSA and promotes deubiquitination of ERCC6, preventing UV-induced degradation of ERCC6. Involved in maintenance of DNA methylation via its interaction with UHRF1 and DNMT1: acts by mediating deubiquitination of UHRF1 and DNMT1, preventing their degradation and promoting DNA methylation by DNMT1. Deubiquitinates alkylation repair enzyme ALKBH3. OTUD4 recruits USP7 and USP9X to stabilize ALKBH3, thereby promoting the repair of alkylated DNA lesions. Acts as a chromatin regulator via its association with the Polycomb group (PcG) multiprotein PRC1-like complex; may act by deubiquitinating components of the PRC1-like complex. Able to mediate deubiquitination of histone H2B; it is however unsure whether this activity takes place in vivo. Exhibits a preference towards 'Lys-48'-linked ubiquitin chains. Increases regulatory T-cells (Treg) suppressive capacity by deubiquitinating and stabilizing the transcription factor FOXP3 which is crucial for Treg cell function. Plays a role in the maintenance of the circadian clock periodicity via deubiquitination and stabilization of the CRY1 and CRY2 proteins. Deubiquitinates REST, thereby stabilizing REST and promoting the maintenance of neural progenitor cells. Deubiquitinates SIRT7, inhibiting SIRT7 histone deacetylase activity and regulating gluconeogenesis. Involved in the regulation of WASH-dependent actin polymerization at the surface of endosomes and the regulation of endosomal protein recycling. It maintains optimal WASH complex activity and precise F-actin levels via deubiquitination of TRIM27 and WASHC1. Mediates the deubiquitination of phosphorylated DEPTOR, promoting its stability and leading to decreased mTORC1 signaling. Its function is as follows. (Microbial infection) Contributes to the overall stabilization and trans-activation capability of the herpesvirus 1 trans-acting transcriptional protein ICP0/VMW110 during HSV-1 infection. Functionally, (Microbial infection) Upon infection with Epstein-Barr virus, the interaction with viral EBNA1 increases the association of USP7 with PML proteins, which is required for the polyubiquitylation and degradation of PML. This Homo sapiens (Human) protein is Ubiquitin carboxyl-terminal hydrolase 7.